The chain runs to 175 residues: Large ribosomal subunit protein bL17m (175 aa).

Residues 1-8 (MRLSVAAA) constitute a mitochondrion transit peptide. The tract at residues 155–175 (DLRQSQEASNHSSHTAQTPGI) is disordered. Polar residues predominate over residues 161–175 (EASNHSSHTAQTPGI).

This sequence belongs to the bacterial ribosomal protein bL17 family. In terms of assembly, component of the mitochondrial large ribosomal subunit (mt-LSU). Mature mammalian 55S mitochondrial ribosomes consist of a small (28S) and a large (39S) subunit. The 28S small subunit contains a 12S ribosomal RNA (12S mt-rRNA) and 30 different proteins. The 39S large subunit contains a 16S rRNA (16S mt-rRNA), a copy of mitochondrial valine transfer RNA (mt-tRNA(Val)), which plays an integral structural role, and 52 different proteins. In terms of tissue distribution, detected in adrenal gland, mammary gland and adipose tissue.

It is found in the mitochondrion. In Homo sapiens (Human), this protein is Large ribosomal subunit protein bL17m (MRPL17).